We begin with the raw amino-acid sequence, 417 residues long: 4-hydroxy-3-methylbut-2-en-1-yl diphosphate synthase (flavodoxin) (417 aa).

Residues Cys-304, Cys-307, Cys-350, and Glu-357 each contribute to the [4Fe-4S] cluster site.

The protein belongs to the IspG family. [4Fe-4S] cluster serves as cofactor.

The enzyme catalyses (2E)-4-hydroxy-3-methylbut-2-enyl diphosphate + oxidized [flavodoxin] + H2O + 2 H(+) = 2-C-methyl-D-erythritol 2,4-cyclic diphosphate + reduced [flavodoxin]. Its pathway is isoprenoid biosynthesis; isopentenyl diphosphate biosynthesis via DXP pathway; isopentenyl diphosphate from 1-deoxy-D-xylulose 5-phosphate: step 5/6. In terms of biological role, converts 2C-methyl-D-erythritol 2,4-cyclodiphosphate (ME-2,4cPP) into 1-hydroxy-2-methyl-2-(E)-butenyl 4-diphosphate. This chain is 4-hydroxy-3-methylbut-2-en-1-yl diphosphate synthase (flavodoxin), found in Rhizobium rhizogenes (strain K84 / ATCC BAA-868) (Agrobacterium radiobacter).